A 77-amino-acid polypeptide reads, in one-letter code: U8-lycotoxin-Ls1h (77 aa).

The signal sequence occupies residues 1–20; the sequence is MKLIIFTGLVLFAIVSLIEV. A propeptide spanning residues 21–26 is cleaved from the precursor; sequence QADNER.

This sequence belongs to the neurotoxin 19 (CSTX) family. 08 (U8-Lctx) subfamily. Contains 4 disulfide bonds. Expressed by the venom gland.

The protein localises to the secreted. This is U8-lycotoxin-Ls1h from Lycosa singoriensis (Wolf spider).